The chain runs to 1174 residues: Fanconi anemia group J protein homolog (1174 aa).

Residues 11-445 (GGVKIHFPCR…KSHEPLRDVC (435 aa)) enclose the Helicase ATP-binding domain. Over residues 101 to 126 (NLDTSPHFNSPSKPSSGRNGVSTPCQ) the composition is skewed to polar residues. Disordered regions lie at residues 101-160 (NLDT…EKKR) and 187-208 (LASE…DRKD). The segment covering 134-143 (LAAKLSAKKQ) has biased composition (low complexity). The short motif at 158-175 (KKRIRPLETTQQIRKRHC) is the Nuclear localization signal element. Position 185–192 (185–192 (ARLASEKR)) interacts with ATP. Residues Cys-286, Cys-301, Cys-313, and Cys-353 each coordinate [4Fe-4S] cluster. Positions 393–396 (VILD) match the DEAH box motif. The tract at residues 888 to 1063 (SRRHQKVTNR…SNETADTSLG (176 aa)) is interaction with BRCA1. Polar residues-rich tracts occupy residues 923 to 935 (TSVS…SPEN) and 990 to 1001 (SRSSSPTFGKQT). 2 disordered regions span residues 923–1001 (TSVS…GKQT) and 1102–1155 (LSPG…SSHS). Phosphoserine occurs at positions 929, 932, and 994. Over residues 1138–1147 (DTNEENGELV) the composition is skewed to acidic residues. The residue at position 1174 (Lys-1174) is an N6-acetyllysine.

This sequence belongs to the DEAD box helicase family. DEAH subfamily. As to quaternary structure, binds directly to the BRCT domains of BRCA1. Interacts with the CIA complex components CIAO1, CIAO2B and MMS19. Requires [4Fe-4S] cluster as cofactor. Phosphorylated. Phosphorylation is necessary for interaction with BRCA1, and is cell-cycle regulated.

It localises to the nucleus. Its subcellular location is the cytoplasm. The catalysed reaction is Couples ATP hydrolysis with the unwinding of duplex DNA at the replication fork by translocating in the 5'-3' direction. This creates two antiparallel DNA single strands (ssDNA). The leading ssDNA polymer is the template for DNA polymerase III holoenzyme which synthesizes a continuous strand.. It carries out the reaction ATP + H2O = ADP + phosphate + H(+). DNA-dependent helicase and 5' to 3' DNA helicase required for the maintenance of chromosomal stability. Acts late in the Fanconi anemia pathway, after FANCD2 ubiquitination. Involved in the repair of DNA double-strand breaks by homologous recombination in a manner that depends on its association with BRCA1. Involved in the repair of abasic sites at replication forks by promoting the degradation of DNA-protein cross-links: acts by catalyzing unfolding of HMCES DNA-protein cross-link via its helicase activity, exposing the underlying DNA and enabling cleavage of the DNA-protein adduct by the SPRTN metalloprotease. Can unwind RNA:DNA hybrids and G-quadruplex DNA. In Mus musculus (Mouse), this protein is Fanconi anemia group J protein homolog.